Reading from the N-terminus, the 225-residue chain is Glycerol-3-phosphate acyltransferase (225 aa).

The next 6 helical transmembrane spans lie at 1–21, 56–76, 95–115, 134–154, 159–178, and 182–201; these read MAIW…LGSF, GPGL…VALV, IGLW…LGHS, VLLV…ALVV, IVSL…MFVA, and LAYV…RHWA.

This sequence belongs to the PlsY family. In terms of assembly, probably interacts with PlsX.

The protein resides in the cell inner membrane. It catalyses the reaction an acyl phosphate + sn-glycerol 3-phosphate = a 1-acyl-sn-glycero-3-phosphate + phosphate. It functions in the pathway lipid metabolism; phospholipid metabolism. Its function is as follows. Catalyzes the transfer of an acyl group from acyl-phosphate (acyl-PO(4)) to glycerol-3-phosphate (G3P) to form lysophosphatidic acid (LPA). This enzyme utilizes acyl-phosphate as fatty acyl donor, but not acyl-CoA or acyl-ACP. The chain is Glycerol-3-phosphate acyltransferase from Acaryochloris marina (strain MBIC 11017).